The primary structure comprises 160 residues: Lymphocyte antigen 96 (160 aa).

The signal sequence occupies residues 1-16; that stretch reads MLPFILFSTLLPLIFT. 3 cysteine pairs are disulfide-bonded: Cys-25/Cys-51, Cys-37/Cys-148, and Cys-95/Cys-105. Asn-26, Asn-77, and Asn-101 each carry an N-linked (GlcNAc...) asparagine glycan. An interaction with lipopolysaccharide region spans residues 119–123; it reads FSFKG. The N-linked (GlcNAc...) asparagine glycan is linked to Asn-150.

Heterogeneous homomer formed from homodimers; disulfide-linked. Belongs to the lipopolysaccharide (LPS) receptor, a multi-protein complex containing at least CD14, LY96 and TLR4. Binds to the extracellular domains of TLR2 and TLR4. Ligand binding induces interaction with TLR4 and oligomerization of the complex. Post-translationally, N-glycosylated.

Its subcellular location is the secreted. The protein resides in the extracellular space. In terms of biological role, binds bacterial lipopolysaccharide (LPS). Cooperates with TLR4 in the innate immune response to bacterial lipopolysaccharide (LPS), and with TLR2 in the response to cell wall components from Gram-positive and Gram-negative bacteria. Enhances TLR4-dependent activation of NF-kappa-B. Cells expressing both LY96 and TLR4, but not TLR4 alone, respond to LPS. In Cricetulus griseus (Chinese hamster), this protein is Lymphocyte antigen 96 (LY96).